An 82-amino-acid polypeptide reads, in one-letter code: ATP synthase subunit c (82 aa).

Helical transmembrane passes span 7–27 and 53–73; these read FVALAAGLIIGLGAIGACIGI and FLLAGLIDAAFLIGVGIAMMF.

Belongs to the ATPase C chain family. In terms of assembly, F-type ATPases have 2 components, F(1) - the catalytic core - and F(0) - the membrane proton channel. F(1) has five subunits: alpha(3), beta(3), gamma(1), delta(1), epsilon(1). F(0) has three main subunits: a(1), b(2) and c(10-14). The alpha and beta chains form an alternating ring which encloses part of the gamma chain. F(1) is attached to F(0) by a central stalk formed by the gamma and epsilon chains, while a peripheral stalk is formed by the delta and b chains.

The protein resides in the cell inner membrane. Functionally, f(1)F(0) ATP synthase produces ATP from ADP in the presence of a proton or sodium gradient. F-type ATPases consist of two structural domains, F(1) containing the extramembraneous catalytic core and F(0) containing the membrane proton channel, linked together by a central stalk and a peripheral stalk. During catalysis, ATP synthesis in the catalytic domain of F(1) is coupled via a rotary mechanism of the central stalk subunits to proton translocation. Key component of the F(0) channel; it plays a direct role in translocation across the membrane. A homomeric c-ring of between 10-14 subunits forms the central stalk rotor element with the F(1) delta and epsilon subunits. This Aromatoleum aromaticum (strain DSM 19018 / LMG 30748 / EbN1) (Azoarcus sp. (strain EbN1)) protein is ATP synthase subunit c.